We begin with the raw amino-acid sequence, 370 residues long: Queuine tRNA-ribosyltransferase (370 aa).

Asp-92 serves as the catalytic Proton acceptor. Substrate-binding positions include 92–96 (DSGGF), Asp-146, Gln-190, and Gly-217. The tract at residues 248 to 254 (GVGTPEN) is RNA binding. Asp-267 functions as the Nucleophile in the catalytic mechanism. Residues Cys-305, Cys-307, Cys-310, and His-336 each contribute to the Zn(2+) site.

It belongs to the queuine tRNA-ribosyltransferase family. In terms of assembly, homodimer. Within each dimer, one monomer is responsible for RNA recognition and catalysis, while the other monomer binds to the replacement base PreQ1. Zn(2+) is required as a cofactor.

It carries out the reaction 7-aminomethyl-7-carbaguanine + guanosine(34) in tRNA = 7-aminomethyl-7-carbaguanosine(34) in tRNA + guanine. It participates in tRNA modification; tRNA-queuosine biosynthesis. Its function is as follows. Catalyzes the base-exchange of a guanine (G) residue with the queuine precursor 7-aminomethyl-7-deazaguanine (PreQ1) at position 34 (anticodon wobble position) in tRNAs with GU(N) anticodons (tRNA-Asp, -Asn, -His and -Tyr). Catalysis occurs through a double-displacement mechanism. The nucleophile active site attacks the C1' of nucleotide 34 to detach the guanine base from the RNA, forming a covalent enzyme-RNA intermediate. The proton acceptor active site deprotonates the incoming PreQ1, allowing a nucleophilic attack on the C1' of the ribose to form the product. After dissociation, two additional enzymatic reactions on the tRNA convert PreQ1 to queuine (Q), resulting in the hypermodified nucleoside queuosine (7-(((4,5-cis-dihydroxy-2-cyclopenten-1-yl)amino)methyl)-7-deazaguanosine). This is Queuine tRNA-ribosyltransferase from Desulforapulum autotrophicum (strain ATCC 43914 / DSM 3382 / VKM B-1955 / HRM2) (Desulfobacterium autotrophicum).